The chain runs to 108 residues: uncharacterized protein (108 aa).

Transmembrane regions (helical) follow at residues Tyr32–Ile52 and Ser68–Gly88.

The protein resides in the membrane. This is an uncharacterized protein from Saccharomyces cerevisiae (strain ATCC 204508 / S288c) (Baker's yeast).